Reading from the N-terminus, the 398-residue chain is NADH-quinone oxidoreductase subunit D (398 aa).

It belongs to the complex I 49 kDa subunit family. In terms of assembly, NDH-1 is composed of 14 different subunits. Subunits NuoB, C, D, E, F, and G constitute the peripheral sector of the complex.

The protein localises to the cell inner membrane. It carries out the reaction a quinone + NADH + 5 H(+)(in) = a quinol + NAD(+) + 4 H(+)(out). NDH-1 shuttles electrons from NADH, via FMN and iron-sulfur (Fe-S) centers, to quinones in the respiratory chain. The immediate electron acceptor for the enzyme in this species is believed to be ubiquinone. Couples the redox reaction to proton translocation (for every two electrons transferred, four hydrogen ions are translocated across the cytoplasmic membrane), and thus conserves the redox energy in a proton gradient. This chain is NADH-quinone oxidoreductase subunit D, found in Bradyrhizobium sp. (strain BTAi1 / ATCC BAA-1182).